Consider the following 276-residue polypeptide: NADPH-dependent 7-cyano-7-deazaguanine reductase (276 aa).

A substrate-binding site is contributed by 83–85 (IES). Residue 85 to 86 (SK) coordinates NADPH. The active-site Thioimide intermediate is cysteine 184. Residue aspartate 191 is the Proton donor of the active site. 223–224 (HE) serves as a coordination point for substrate. Residue 252–253 (RG) participates in NADPH binding.

This sequence belongs to the GTP cyclohydrolase I family. QueF type 2 subfamily. Homodimer.

It is found in the cytoplasm. The catalysed reaction is 7-aminomethyl-7-carbaguanine + 2 NADP(+) = 7-cyano-7-deazaguanine + 2 NADPH + 3 H(+). It participates in tRNA modification; tRNA-queuosine biosynthesis. Functionally, catalyzes the NADPH-dependent reduction of 7-cyano-7-deazaguanine (preQ0) to 7-aminomethyl-7-deazaguanine (preQ1). The chain is NADPH-dependent 7-cyano-7-deazaguanine reductase from Pseudomonas fluorescens (strain SBW25).